Here is a 142-residue protein sequence, read N- to C-terminus: Sorting nexin-3 (142 aa).

The PX domain maps to 21-138 (NFLEIEVRNP…ASFIQDPNWD (118 aa)). 5 residues coordinate a 1,2-diacyl-sn-glycero-3-phospho-(1D-myo-inositol-3-phosphate): Arg64, Ser66, Lys90, Arg95, and Arg104.

This sequence belongs to the sorting nexin family.

The protein resides in the cytoplasm. It is found in the golgi apparatus membrane. Its subcellular location is the prevacuolar compartment membrane. In terms of biological role, required for retention of late Golgi membrane proteins. Component of the retrieval machinery that functions by direct interaction with the cytosolic tails of certain TGN membrane proteins during the sorting/budding process at the prevacuolar compartment. Binds phosphatidylinositol 3-phosphate (PtdIns(P3)). This Aspergillus fumigatus (strain ATCC MYA-4609 / CBS 101355 / FGSC A1100 / Af293) (Neosartorya fumigata) protein is Sorting nexin-3 (snx3).